We begin with the raw amino-acid sequence, 101 residues long: Small ribosomal subunit protein uS14 (101 aa).

Positions 1–20 are disordered; it reads MAKTSQVNRNKRREKMAARD.

This sequence belongs to the universal ribosomal protein uS14 family. In terms of assembly, part of the 30S ribosomal subunit. Contacts proteins S3 and S10.

Binds 16S rRNA, required for the assembly of 30S particles and may also be responsible for determining the conformation of the 16S rRNA at the A site. This is Small ribosomal subunit protein uS14 from Acidiphilium cryptum (strain JF-5).